The sequence spans 208 residues: Small ribosomal subunit protein uS4 (208 aa).

Residues 31-51 (SALDKRAYGPGQHGQRRAKTS) form a disordered region. Residues 98-156 (RRLDNVVYRMGFATTRSSARQLVTHGHVLVDGKRLDIPSYFVRSGQKIEIKEKTKSNPQ) form the S4 RNA-binding domain.

Belongs to the universal ribosomal protein uS4 family. Part of the 30S ribosomal subunit. Contacts protein S5. The interaction surface between S4 and S5 is involved in control of translational fidelity.

One of the primary rRNA binding proteins, it binds directly to 16S rRNA where it nucleates assembly of the body of the 30S subunit. Functionally, with S5 and S12 plays an important role in translational accuracy. This is Small ribosomal subunit protein uS4 from Helicobacter pylori (strain HPAG1).